We begin with the raw amino-acid sequence, 735 residues long: Photosystem I P700 chlorophyll a apoprotein A2 (735 aa).

8 helical membrane passes run 47 to 70 (IFAS…FHVA), 136 to 159 (LYIG…LHLQ), 176 to 200 (LNHH…HVAI), 274 to 292 (MAHH…GHMY), 331 to 354 (LHFQ…QHMY), 370 to 396 (ASLY…IFFI), 418 to 440 (AIIS…LYVH), and 518 to 536 (FLVH…LILV). Positions 560 and 569 each coordinate [4Fe-4S] cluster. The next 2 membrane-spanning stretches (helical) occupy residues 576–597 (AFYL…YFHW) and 644–666 (LSVW…MFLI). Residues H655, M663, and Y671 each coordinate chlorophyll a. Residue W672 participates in phylloquinone binding. The chain crosses the membrane as a helical span at residues 708–728 (VVGLAHFSAGYILTYAAFLIA).

This sequence belongs to the PsaA/PsaB family. In terms of assembly, the PsaA/B heterodimer binds the P700 chlorophyll special pair and subsequent electron acceptors. PSI consists of a core antenna complex that captures photons, and an electron transfer chain that converts photonic excitation into a charge separation. The eukaryotic PSI reaction center is composed of at least 11 subunits. The cofactor is P700 is a chlorophyll a/chlorophyll a' dimer, A0 is one or more chlorophyll a, A1 is one or both phylloquinones and FX is a shared 4Fe-4S iron-sulfur center..

It localises to the plastid. The protein resides in the chloroplast thylakoid membrane. The enzyme catalyses reduced [plastocyanin] + hnu + oxidized [2Fe-2S]-[ferredoxin] = oxidized [plastocyanin] + reduced [2Fe-2S]-[ferredoxin]. PsaA and PsaB bind P700, the primary electron donor of photosystem I (PSI), as well as the electron acceptors A0, A1 and FX. PSI is a plastocyanin/cytochrome c6-ferredoxin oxidoreductase, converting photonic excitation into a charge separation, which transfers an electron from the donor P700 chlorophyll pair to the spectroscopically characterized acceptors A0, A1, FX, FA and FB in turn. Oxidized P700 is reduced on the lumenal side of the thylakoid membrane by plastocyanin or cytochrome c6. This chain is Photosystem I P700 chlorophyll a apoprotein A2, found in Tupiella akineta (Green alga).